The primary structure comprises 175 residues: MATALVLGYSAFDLGLFSDKDPRLKLIKKAIRKDLEAMAADGVSWLVFTGSLGFEYWVLEVAQEMKTEYGFQLATIFAFETHGENWNEDNQMKLSRFKQVDFVKYAYPRYEHKGQLRDYQQFLLENTNSSYLFYDEENETKLAYFYQKMKNQEDYFIKRLTFDQLNELAENFSEN.

It belongs to the UPF0398 family.

The sequence is that of UPF0398 protein SPH_0478 from Streptococcus pneumoniae (strain Hungary19A-6).